Consider the following 434-residue polypeptide: Transcription initiation factor IIE subunit alpha (434 aa).

The region spanning 8–99 (VQRLIKMIMR…DFCSTIDSIK (92 aa)) is the HTH TFE/IIEalpha-type domain. The segment at 124-151 (CPFCNKKFSSLDVLSLVTNEGTFACNVC) adopts a C4-type zinc-finger fold. 3 disordered regions span residues 217-251 (QQNLSKSNSDVRLSTSSPSITVDFSADKETDEKRE), 357-408 (STDY…EMQE), and 415-434 (INGFNEDDEDDEDEADFEDV). The span at 226–238 (DVRLSTSSPSITV) shows a compositional bias: polar residues. Basic and acidic residues-rich tracts occupy residues 241–251 (SADKETDEKRE) and 376–385 (IQNKRTKSIE). The segment covering 386 to 399 (ENNSLPPIVSTNGI) has biased composition (polar residues). Residues 419–434 (NEDDEDDEDEADFEDV) are compositionally biased toward acidic residues.

It belongs to the TFIIE alpha subunit family. As to quaternary structure, TFIIE is a tetramer of two alpha (tfa1) and two beta (tfa2) subunits.

It is found in the nucleus. Functionally, recruits TFIIH to the initiation complex and stimulates the RNA polymerase II C-terminal domain kinase and DNA-dependent ATPase activities of TFIIH. Both TFIIH and TFIIE are required for promoter clearance by RNA polymerase. This Schizosaccharomyces pombe (strain 972 / ATCC 24843) (Fission yeast) protein is Transcription initiation factor IIE subunit alpha (tfa1).